Here is a 269-residue protein sequence, read N- to C-terminus: 4-hydroxy-tetrahydrodipicolinate reductase (269 aa).

NAD(+) contacts are provided by residues 8-13 and Glu34; that span reads GAAGRM. Residue Arg35 coordinates NADP(+). NAD(+)-binding positions include 98–100 and 122–125; these read GTT and APNY. His155 (proton donor/acceptor) is an active-site residue. His156 provides a ligand contact to (S)-2,3,4,5-tetrahydrodipicolinate. Lys159 (proton donor) is an active-site residue. 165–166 contacts (S)-2,3,4,5-tetrahydrodipicolinate; it reads GT.

This sequence belongs to the DapB family.

The protein resides in the cytoplasm. The enzyme catalyses (S)-2,3,4,5-tetrahydrodipicolinate + NAD(+) + H2O = (2S,4S)-4-hydroxy-2,3,4,5-tetrahydrodipicolinate + NADH + H(+). It carries out the reaction (S)-2,3,4,5-tetrahydrodipicolinate + NADP(+) + H2O = (2S,4S)-4-hydroxy-2,3,4,5-tetrahydrodipicolinate + NADPH + H(+). It functions in the pathway amino-acid biosynthesis; L-lysine biosynthesis via DAP pathway; (S)-tetrahydrodipicolinate from L-aspartate: step 4/4. Functionally, catalyzes the conversion of 4-hydroxy-tetrahydrodipicolinate (HTPA) to tetrahydrodipicolinate. The protein is 4-hydroxy-tetrahydrodipicolinate reductase of Vibrio parahaemolyticus serotype O3:K6 (strain RIMD 2210633).